Consider the following 287-residue polypeptide: uncharacterized protein (287 aa).

The disordered stretch occupies residues 1 to 44 (MAAPRNLTGDGGARQLVKDEESPAASSAAKGLLNDDSPTGKRTK). The residue at position 37 (S37) is a Phosphoserine. The next 5 helical transmembrane spans lie at 55 to 75 (FAVF…IYLT), 124 to 144 (TFMI…FGVV), 147 to 167 (FVLV…LSKL), 218 to 238 (PIVD…LMPA), and 260 to 280 (DFKT…PALL).

Its subcellular location is the membrane. This is an uncharacterized protein from Arabidopsis thaliana (Mouse-ear cress).